The following is a 428-amino-acid chain: Serine--tRNA ligase (428 aa).

Position 231–233 (Thr231–Glu233) interacts with L-serine. ATP contacts are provided by residues Arg262–Glu264 and Val278. Glu285 is an L-serine binding site. Glu349 to Ser352 is an ATP binding site. Thr384 is a binding site for L-serine.

The protein belongs to the class-II aminoacyl-tRNA synthetase family. Type-1 seryl-tRNA synthetase subfamily. As to quaternary structure, homodimer. The tRNA molecule binds across the dimer.

The protein localises to the cytoplasm. The enzyme catalyses tRNA(Ser) + L-serine + ATP = L-seryl-tRNA(Ser) + AMP + diphosphate + H(+). It catalyses the reaction tRNA(Sec) + L-serine + ATP = L-seryl-tRNA(Sec) + AMP + diphosphate + H(+). It participates in aminoacyl-tRNA biosynthesis; selenocysteinyl-tRNA(Sec) biosynthesis; L-seryl-tRNA(Sec) from L-serine and tRNA(Sec): step 1/1. In terms of biological role, catalyzes the attachment of serine to tRNA(Ser). Is also able to aminoacylate tRNA(Sec) with serine, to form the misacylated tRNA L-seryl-tRNA(Sec), which will be further converted into selenocysteinyl-tRNA(Sec). This chain is Serine--tRNA ligase, found in Bifidobacterium longum subsp. infantis (strain ATCC 15697 / DSM 20088 / JCM 1222 / NCTC 11817 / S12).